The primary structure comprises 415 residues: Serine hydroxymethyltransferase (415 aa).

Residues Leu-117 and Gly-121–Leu-123 contribute to the (6S)-5,6,7,8-tetrahydrofolate site. Residue Lys-226 is modified to N6-(pyridoxal phosphate)lysine.

The protein belongs to the SHMT family. As to quaternary structure, homodimer. Pyridoxal 5'-phosphate serves as cofactor.

It localises to the cytoplasm. It carries out the reaction (6R)-5,10-methylene-5,6,7,8-tetrahydrofolate + glycine + H2O = (6S)-5,6,7,8-tetrahydrofolate + L-serine. It participates in one-carbon metabolism; tetrahydrofolate interconversion. The protein operates within amino-acid biosynthesis; glycine biosynthesis; glycine from L-serine: step 1/1. Catalyzes the reversible interconversion of serine and glycine with tetrahydrofolate (THF) serving as the one-carbon carrier. This reaction serves as the major source of one-carbon groups required for the biosynthesis of purines, thymidylate, methionine, and other important biomolecules. Also exhibits THF-independent aldolase activity toward beta-hydroxyamino acids, producing glycine and aldehydes, via a retro-aldol mechanism. This chain is Serine hydroxymethyltransferase, found in Leptospira interrogans serogroup Icterohaemorrhagiae serovar copenhageni (strain Fiocruz L1-130).